We begin with the raw amino-acid sequence, 353 residues long: Farnesyl pyrophosphate synthase (353 aa).

Residues K57, R60, and Q96 each coordinate isopentenyl diphosphate. N6-(2-hydroxyisobutyryl)lysine; alternate is present on K57. K57 carries the N6-acetyllysine; alternate modification. Mg(2+)-binding residues include D103 and D107. R112 contacts dimethylallyl diphosphate. R113 contributes to the isopentenyl diphosphate binding site. Dimethylallyl diphosphate-binding residues include K200, T201, Q240, K257, and K266.

The protein belongs to the FPP/GGPP synthase family. In terms of assembly, homodimer. Interacts with RSAD2. Mg(2+) serves as cofactor. In terms of tissue distribution, testis, liver, kidney, brain and adrenal gland.

It localises to the cytoplasm. It carries out the reaction isopentenyl diphosphate + dimethylallyl diphosphate = (2E)-geranyl diphosphate + diphosphate. The enzyme catalyses isopentenyl diphosphate + (2E)-geranyl diphosphate = (2E,6E)-farnesyl diphosphate + diphosphate. The protein operates within isoprenoid biosynthesis; farnesyl diphosphate biosynthesis; farnesyl diphosphate from geranyl diphosphate and isopentenyl diphosphate: step 1/1. It participates in isoprenoid biosynthesis; geranyl diphosphate biosynthesis; geranyl diphosphate from dimethylallyl diphosphate and isopentenyl diphosphate: step 1/1. Inactivated by interferon-induced RSAD2. This inactivation may result of disruption of lipid rafts at the plasma membrane, and thus have an antiviral effect since many enveloped viruses need lipid rafts to bud efficiently out of the cell. Functionally, key enzyme in isoprenoid biosynthesis which catalyzes the formation of farnesyl diphosphate (FPP), a precursor for several classes of essential metabolites including sterols, dolichols, carotenoids, and ubiquinones. FPP also serves as substrate for protein farnesylation and geranylgeranylation. Catalyzes the sequential condensation of isopentenyl pyrophosphate with the allylic pyrophosphates, dimethylallyl pyrophosphate, and then with the resultant geranylpyrophosphate to the ultimate product farnesyl pyrophosphate. This Rattus norvegicus (Rat) protein is Farnesyl pyrophosphate synthase (Fdps).